A 502-amino-acid chain; its full sequence is Hexokinase-9 (502 aa).

A helical membrane pass occupies residues 5–24; sequence AALASAAMAAAAVAVVSTVL. The 452-residue stretch at 37-488 folds into the Hexokinase domain; it reads RAEAVLLRDL…SGVGAALLAA (452 aa). The interval 92–230 is hexokinase small subdomain; the sequence is SGGEKGMFYA…GLDMKVTALV (139 aa). Gly106, Thr107, and Asn108 together coordinate ADP. 4 residues coordinate D-glucose: Thr196, Lys197, Asn231, and Asp232. The segment at 231–477 is hexokinase large subdomain; that stretch reads NDTVGTLAAG…PSVMIKHVND (247 aa). Thr255 contributes to the ADP binding site. Asn258, Glu286, and Glu317 together coordinate D-glucose. Residue Gly442 participates in ADP binding.

The protein belongs to the hexokinase family. In terms of tissue distribution, expressed in roots, leaves, flowers, immature seeds, endosperm and seed coat.

It is found in the plastid. The protein localises to the chloroplast outer membrane. It catalyses the reaction a D-hexose + ATP = a D-hexose 6-phosphate + ADP + H(+). It carries out the reaction D-fructose + ATP = D-fructose 6-phosphate + ADP + H(+). The enzyme catalyses D-glucose + ATP = D-glucose 6-phosphate + ADP + H(+). The protein operates within carbohydrate metabolism; hexose metabolism. It participates in carbohydrate degradation; glycolysis; D-glyceraldehyde 3-phosphate and glycerone phosphate from D-glucose: step 1/4. Functionally, fructose and glucose phosphorylating enzyme. The chain is Hexokinase-9 (HXK9) from Oryza sativa subsp. japonica (Rice).